Here is an 81-residue protein sequence, read N- to C-terminus: Protease inhibitor 1 (81 aa).

The N-terminal stretch at 1-24 (MSSGGLLLLLGLLTLWAELTPVSG) is a signal peptide. A BPTI/Kunitz inhibitor domain is found at 29–79 (CELPAETGPCKARIRAFYYNPHSHKCLEFTYGGCKGNANNFKTIDECNRTC). Disulfide bonds link Cys-29–Cys-79, Cys-38–Cys-62, and Cys-54–Cys-75.

In terms of tissue distribution, expressed by the venom gland.

It is found in the secreted. Its function is as follows. Snake venom serine protease inhibitor. In Walterinnesia aegyptia (Desert black snake), this protein is Protease inhibitor 1.